A 446-amino-acid polypeptide reads, in one-letter code: Phosphoglucosamine mutase (446 aa).

Ser-102 serves as the catalytic Phosphoserine intermediate. Mg(2+) is bound by residues Ser-102, Asp-241, Asp-243, and Asp-245. Residue Ser-102 is modified to Phosphoserine.

It belongs to the phosphohexose mutase family. Requires Mg(2+) as cofactor. Activated by phosphorylation.

The catalysed reaction is alpha-D-glucosamine 1-phosphate = D-glucosamine 6-phosphate. Its function is as follows. Catalyzes the conversion of glucosamine-6-phosphate to glucosamine-1-phosphate. The polypeptide is Phosphoglucosamine mutase (Idiomarina loihiensis (strain ATCC BAA-735 / DSM 15497 / L2-TR)).